Reading from the N-terminus, the 436-residue chain is 3-ketoacyl-CoA thiolase (436 aa).

Residue Cys99 is the Acyl-thioester intermediate of the active site. Catalysis depends on proton acceptor residues His392 and Cys422.

Belongs to the thiolase-like superfamily. Thiolase family. As to quaternary structure, heterotetramer of two alpha chains (FadJ) and two beta chains (FadI).

The protein localises to the cytoplasm. It carries out the reaction an acyl-CoA + acetyl-CoA = a 3-oxoacyl-CoA + CoA. It participates in lipid metabolism; fatty acid beta-oxidation. Its function is as follows. Catalyzes the final step of fatty acid oxidation in which acetyl-CoA is released and the CoA ester of a fatty acid two carbons shorter is formed. In Cronobacter sakazakii (strain ATCC BAA-894) (Enterobacter sakazakii), this protein is 3-ketoacyl-CoA thiolase.